The chain runs to 107 residues: Ubiquitin-related modifier 1 (107 aa).

A 1-thioglycine modification is found at G107. G107 is covalently cross-linked (Glycyl lysine isopeptide (Gly-Lys) (interchain with K-? in acceptor proteins)).

The protein belongs to the URM1 family. C-terminal thiocarboxylation occurs in 2 steps, it is first acyl-adenylated (-COAMP) via the hesA/moeB/thiF part of UBA4, then thiocarboxylated (-COSH) via the rhodanese domain of UBA4.

It localises to the cytoplasm. The protein operates within tRNA modification; 5-methoxycarbonylmethyl-2-thiouridine-tRNA biosynthesis. Its function is as follows. Acts as a sulfur carrier required for 2-thiolation of mcm(5)S(2)U at tRNA wobble positions of cytosolic tRNA(Lys), tRNA(Glu) and tRNA(Gln). Serves as sulfur donor in tRNA 2-thiolation reaction by being thiocarboxylated (-COSH) at its C-terminus by the MOCS3 homolog UBA4. The sulfur is then transferred to tRNA to form 2-thiolation of mcm(5)S(2)U. Prior mcm(5) tRNA modification by the elongator complex is required for 2-thiolation. Also acts as a ubiquitin-like protein (UBL) that is covalently conjugated via an isopeptide bond to lysine residues of target proteins such as AHP1. The thiocarboxylated form serves as substrate for conjugation and oxidative stress specifically induces the formation of UBL-protein conjugates. This is Ubiquitin-related modifier 1 from Mycosarcoma maydis (Corn smut fungus).